The sequence spans 214 residues: Ribonuclease HII (214 aa).

Residues 26–214 (EIVCGVDEAG…PVREAFDLIR (189 aa)) enclose the RNase H type-2 domain. Asp-32, Glu-33, and Asp-124 together coordinate a divalent metal cation.

It belongs to the RNase HII family. It depends on Mn(2+) as a cofactor. Mg(2+) serves as cofactor.

The protein resides in the cytoplasm. The enzyme catalyses Endonucleolytic cleavage to 5'-phosphomonoester.. Endonuclease that specifically degrades the RNA of RNA-DNA hybrids. The protein is Ribonuclease HII of Burkholderia pseudomallei (strain 668).